The primary structure comprises 135 residues: Putative pre-16S rRNA nuclease (135 aa).

This sequence belongs to the YqgF nuclease family.

It localises to the cytoplasm. Functionally, could be a nuclease involved in processing of the 5'-end of pre-16S rRNA. The protein is Putative pre-16S rRNA nuclease of Clostridium novyi (strain NT).